A 158-amino-acid chain; its full sequence is uncharacterized protein (158 aa).

It localises to the mitochondrion. This is an uncharacterized protein from Arabidopsis thaliana (Mouse-ear cress).